A 142-amino-acid polypeptide reads, in one-letter code: Holo-[acyl-carrier-protein] synthase (142 aa).

Residues Asp-8 and Glu-57 each contribute to the Mg(2+) site.

This sequence belongs to the P-Pant transferase superfamily. AcpS family. Mg(2+) is required as a cofactor.

It is found in the cytoplasm. The catalysed reaction is apo-[ACP] + CoA = holo-[ACP] + adenosine 3',5'-bisphosphate + H(+). In terms of biological role, transfers the 4'-phosphopantetheine moiety from coenzyme A to a Ser of acyl-carrier-protein. The protein is Holo-[acyl-carrier-protein] synthase of Maricaulis maris (strain MCS10) (Caulobacter maris).